The sequence spans 466 residues: uncharacterized protein (466 aa).

In terms of domain architecture, C2 NT-type spans N4–L199. 3 disordered regions span residues A262 to I298, L374 to M393, and E400 to R452. Residues T266–I298 are compositionally biased toward polar residues. S433 and S439 each carry phosphoserine.

To S.pombe SpCC1494.08c.

This is an uncharacterized protein from Saccharomyces cerevisiae (strain ATCC 204508 / S288c) (Baker's yeast).